Reading from the N-terminus, the 727-residue chain is Adhesion G protein-coupled receptor L4 (727 aa).

Residues 1–19 (MKLLLFAAWFSSLLDPCRF) form the signal peptide. Residues 20 to 467 (LDICQSCHPN…LAHYNVLTRI (448 aa)) lie on the Extracellular side of the membrane. The EGF-like 1; calcium-binding domain occupies 52–90 (DDNECETVPEICGLHANCTNYVGGYYCNCLSGFISNGTE). 6 disulfide bridges follow: Cys-56–Cys-69, Cys-63–Cys-78, Cys-106–Cys-118, Cys-112–Cys-127, Cys-408–Cys-438, and Cys-426–Cys-440. An EGF-like 2; calcium-binding domain is found at 102–139 (DINECEEDRKCGPNSKCHNNIGSFICSCLRGYTSPAGP). The GAIN-B domain maps to 282-456 (TQMQVHAGDV…AILMSSARAN (175 aa)). Positions 408 to 456 (CAFWEYSPSMMGHWSLDGCIRTRVNTTHTSCSCNHLTHFAILMSSARAN) are GPS. A helical transmembrane segment spans residues 468–488 (TQLGMVISLICLSMCIFTFWF). The Cytoplasmic segment spans residues 489–496 (FRDIQNTR). A helical membrane pass occupies residues 497–517 (TTIHKNLCCSLFMAQFIFLIG). The Extracellular segment spans residues 518-535 (INKSAHKWFCSLIAGLLH). The chain crosses the membrane as a helical span at residues 536–556 (YFFLAAFAWMCIEGIHLYLIV). At 557 to 568 (VGVIYNKGFLHR) the chain is on the cytoplasmic side. A helical membrane pass occupies residues 569–589 (NFYAFGYGSPAVVVAISATLG). Topologically, residues 590–609 (YKYYGTSSVCWLSTENNFIW) are extracellular. The helical transmembrane segment at 610–630 (SFIGPAILIILVNLLAFAVII) threads the bilayer. Residues 631–654 (YKVYRHTAVKKPEISHYENIRSCA) lie on the Cytoplasmic side of the membrane. A helical membrane pass occupies residues 655 to 675 (RGAIALLFVLGVTWAFGVMYI). At 676-682 (LYETTLT) the chain is on the extracellular side. Residues 683–703 (AYLFTFANVFQGMFIFIFLCV) traverse the membrane as a helical segment.

Belongs to the G-protein coupled receptor 2 family. Adhesion G-protein coupled receptor (ADGR) subfamily. In terms of assembly, heterodimer of 2 chains generated by proteolytic processing; the large extracellular N-terminal fragment and the membrane-bound C-terminal fragment predominantly remain associated and non-covalently linked. Post-translationally, autoproteolytically processed at the GPS region of the GAIN-B domain; this cleavage modulates receptor activity.

It localises to the cell membrane. Its function is as follows. Orphan receptor that plays a role in vessel formation. This chain is Adhesion G protein-coupled receptor L4, found in Danio rerio (Zebrafish).